The following is a 248-amino-acid chain: NH(3)-dependent NAD(+) synthetase (248 aa).

31-38 (GVSGGVDS) lines the ATP pocket. Mg(2+) is bound at residue Asp37. A deamido-NAD(+)-binding site is contributed by Arg114. Thr134 serves as a coordination point for ATP. Position 139 (Glu139) interacts with Mg(2+). Positions 147 and 154 each coordinate deamido-NAD(+). ATP is bound by residues Lys163 and Ser185. 236-237 (HK) is a deamido-NAD(+) binding site.

It belongs to the NAD synthetase family. Homodimer.

The enzyme catalyses deamido-NAD(+) + NH4(+) + ATP = AMP + diphosphate + NAD(+) + H(+). Its pathway is cofactor biosynthesis; NAD(+) biosynthesis; NAD(+) from deamido-NAD(+) (ammonia route): step 1/1. In terms of biological role, catalyzes the ATP-dependent amidation of deamido-NAD to form NAD. Uses ammonia as a nitrogen source. The polypeptide is NH(3)-dependent NAD(+) synthetase (Methanoregula boonei (strain DSM 21154 / JCM 14090 / 6A8)).